Consider the following 448-residue polypeptide: Velvet complex subunit 2 (448 aa).

Disordered regions lie at residues 1–153 (MNSA…SKIE) and 224–306 (EPGT…NGYG). The segment covering 15-34 (PGPAYSSSAPPPIHTYQQHQ) has biased composition (low complexity). Composition is skewed to pro residues over residues 35-44 (HPPPPLPPPS) and 52-61 (PPLPPPPSAP). Over residues 96–107 (APYQQSQPSQYP) the composition is skewed to low complexity. The segment covering 116–132 (VPPPSQHDEPPPPPSSG) has biased composition (pro residues). The 277-residue stretch at 155 to 431 (GSGWKYSLDV…ANQGIKIPIR (277 aa)) folds into the Velvet domain. Low complexity predominate over residues 260–292 (QQSYGPAPSYPPSSSYGPPQQYYPRHSGYSAEP).

Belongs to the velvet family. VelB subfamily. Component of the heterotrimeric velvet complex composed of LAE1, VE1 and VELB; VE1 acting as a bridging protein between LAE1 and VEL2. Interacts with VE1. Forms a heterodimeric complex with VOS1; the formation of the VELB-VOS1 complex is light-dependent.

The protein localises to the nucleus. The protein resides in the cytoplasm. Its function is as follows. Component of the velvet transcription factor complex that controls sexual/asexual developmental ratio in response to light, promoting sexual development in the darkness while stimulating asexual sporulation under illumination. The velvet complex acts as a global regulator for secondary metabolite gene expression. Component of the VELB-VOS1 heterodimeric complex that plays a dual role in activating genes associated with spore maturation and repressing certain development-associated genes. The VELB-VOS1 complex binds DNA through the DNA-binding domain of VOS1 that recognizes an 11-nucleotide consensus sequence 5'-CTGGCCGCGGC-3' consisting of two motifs in the promoters of key developmental regulatory genes. Controls the expression of the fumonisins gene cluster. Involved in cell wall integrity, cell surface hydrophobicity, hyphal polarity and conidiation pattern. Involved in oxidative stress resistance by positively regulating the transcription of the catalase-encoding gene CAT2. The polypeptide is Velvet complex subunit 2 (Gibberella moniliformis (strain M3125 / FGSC 7600) (Maize ear and stalk rot fungus)).